The primary structure comprises 399 residues: Fluconazole resistance protein 3 (399 aa).

Disordered regions lie at residues 1-21 (MNFK…SKAF) and 103-197 (HPYI…EKDA). The segment covering 103–145 (HPYITNTNNHLSYSNSSEEFSPIGNNMSPDSTGGANSNNFTSG) has biased composition (polar residues). Residues 167–184 (SGNNNNNNGTSRSSQSSS) are compositionally biased toward low complexity. Residues 210-273 (EELQMKRKAQ…ISIATENEIL (64 aa)) enclose the bZIP domain. The interval 215 to 234 (KRKAQNRAAQRAFRERKESK) is basic motif. Residues 235 to 242 (LKELEAKL) form a leucine-zipper region.

It belongs to the bZIP family.

The protein localises to the nucleus. Functionally, transcription factor that confers fluconazole resistance in S.cerevisiae by activation of the PDR5 gene. Can also activate the transcription of S.cerevisiae genes involved in 4-nitroquinoline-N-oxide resistance. This is Fluconazole resistance protein 3 (FCR3) from Candida albicans (Yeast).